The chain runs to 1308 residues: MKLATGLWVWGSLLMAAGTVQPSASQSVCAGTENKLSSLSDLEQQYRALRKYYENCEVVMGNLEITSIEHNRDLSFLRSIREVTGYVLVALNQFRYLPLENLRIIRGTKLYEDRYALAIFLNYRKDGNFGLQELGLKNLTEILNGGVYVDQNKFLCYADTIHWQDIVRNPWPSNMTLVSTNGSSGCGRCHKSCTGRCWGPTENHCQTLTRTVCAEQCDGRCYGPYVSDCCHRECAGGCSGPKDTDCFACMNFNDSGACVTQCPQTFVYNPTTFQLEHNFNAKYTYGAFCVKKCPHNFVVDSSSCVRACPSSKMEVEENGIKMCKPCTDICPKACDGIGTGSLMSAQTVDSSNIDKFINCTKINGNLIFLVTGIHGDPYNAIDAIDPEKLNVFRTVREITGFLNIQSWPPNMTDFSVFSNLVTIGGRVLYSGLSLLILKQQGITSLQFQSLKEISAGNIYITDNSNLCYYHTINWTTLFSTINQRIVIRDNRRAENCTAEGMVCNHLCSNDGCWGPGPDQCLSCRRFSRGKICIESCNLYDGEFREFENGSICVECDSQCEKMEDGLLTCHGPGPDNCTKCSHFKDGPNCVEKCPDGLQGANSFIFKYADQDRECHPCHPNCTQGCNGPTSHDCIYYPWTGHSTLPQHARTPLIAAGVIGGLFILVIMALTFAVYVRRKSIKKKRALRRFLETELVEPLTPSGTAPNQAQLRILKETELKRVKVLGSGAFGTVYKGIWVPEGETVKIPVAIKILNETTGPKANVEFMDEALIMASMDHPHLVRLLGVCLSPTIQLVTQLMPHGCLLDYVHEHKDNIGSQLLLNWCVQIAKGMMYLEERRLVHRDLAARNVLVKSPNHVKITDFGLARLLEGDEKEYNADGGKMPIKWMALECIHYRKFTHQSDVWSYGVTIWELMTFGGKPYDGIPTREIPDLLEKGERLPQPPICTIDVYMVMVKCWMIDADSRPKFKELAAEFSRMARDPQRYLVIQGDDRMKLPSPNDSKFFQNLLDEEDLEDMMDAEEYLVPQAFNIPPPIYTSRTRIDSNRSEIGHSPPPAYTPMSGNQFVYQDGGFATQQGMPMPYRATTSTIPEAPVAQGATAEMFDDSCCNGTLRKPVAPHVQEDSSTQRYSADPTVFAPERNPRGELDEEGYMTPMHDKPKQEYLNPVEENPFVSRRKNGDLQALDNPEYHSASSGPPKAEDEYVNEPLYLNTFANALGSAEYMKNSVLSVPEKAKKAFDNPDYWNHSLPPRSTLQHPDYLQEYSTKYFYKQNGRIRPIVAENPEYLSEFSLKPGTMLPPPPYRHRNTVV.

An N-terminal signal peptide occupies residues 1–25; sequence MKLATGLWVWGSLLMAAGTVQPSAS. Residues 26-652 are Extracellular-facing; sequence QSVCAGTENK…TLPQHARTPL (627 aa). A disulfide bridge links C29 with C56. Residues N138, N174, and N181 are each glycosylated (N-linked (GlcNAc...) asparagine). Intrachain disulfides connect C156–C186, C189–C197, C193–C205, C213–C221, C217–C229, C230–C238, C234–C246, C249–C258, C262–C289, C293–C304, C308–C323, and C326–C330. Residue N253 is glycosylated (N-linked (GlcNAc...) asparagine). N-linked (GlcNAc...) asparagine glycans are attached at residues N410, N473, and N495. 10 cysteine pairs are disulfide-bonded: C503/C512, C507/C520, C523/C532, C536/C552, C555/C569, C559/C577, C580/C589, C593/C614, C617/C625, and C621/C633. Residue N548 is glycosylated (N-linked (GlcNAc...) asparagine). N576 carries an N-linked (GlcNAc...) asparagine glycan. N620 is a glycosylation site (N-linked (GlcNAc...) asparagine). The hydrophobic stretch at 653–673 threads the membrane; it reads IAAGVIGGLFILVIMALTFAV. The Cytoplasmic segment spans residues 674 to 1308; that stretch reads YVRRKSIKKK…PPYRHRNTVV (635 aa). The Nuclear localization signal motif lies at 676 to 684; that stretch reads RRKSIKKKR. One can recognise a Protein kinase domain in the interval 718–985; it reads LKRVKVLGSG…RMARDPQRYL (268 aa). ATP is bound by residues 724–732, K751, 797–799, and 843–848; these read LGSGAFGTV, QLM, and DLAARN. D843 functions as the Proton acceptor in the catalytic mechanism. Residues Y875, Y1035, and Y1056 each carry the phosphotyrosine; by autocatalysis modification. Positions 1032–1035 match the PPxy motif 1 motif; the sequence is PPIY. The disordered stretch occupies residues 1117 to 1149; the sequence is PHVQEDSSTQRYSADPTVFAPERNPRGELDEEG. Phosphotyrosine; by autocatalysis is present on residues Y1150, Y1162, Y1188, Y1202, Y1242, Y1258, and Y1284. The short motif at 1282 to 1285 is the PPxY motif 2 element; it reads PEYL. Positions 1290–1292 match the PDZ-binding motif; the sequence is LKP.

Belongs to the protein kinase superfamily. Tyr protein kinase family. EGF receptor subfamily. In terms of assembly, monomer in the absence of bound ligand. Homodimer or heterodimer with another ERBB family member upon ligand binding, thus forming heterotetramers. Interacts with EGFR and ERBB2. Interacts with DLG2 (via its PDZ domain), DLG3 (via its PDZ domain), DLG4 (via its PDZ domain) and SNTB2 (via its PDZ domain). Interacts with MUC1. Interacts (via its PPxy motifs) with WWOX. Interacts (via the PPxY motif 3 of isoform JM-A CYT-2) with YAP1 (via the WW domain 1 of isoform 1). Interacts (isoform JM-A CYT-1 and isoform JM-B CYT-1) with WWP1. Interacts (via its intracellular domain) with TRIM28. Interacts (via the intracellular domains of both CYT-1 and CYT-2 isoforms) with KAP1; the interaction does not phosphorylate KAP1 but represses ERBB4-mediated transcriptional activity. Interacts with PRPU, DDX23, MATR3, RBM15, ILF3, KAP1, U5S1, U2SURP, ITCH, HNRNPU, AP2A1, NULC, LEO1, WWP2, IGHG1, HXK1, GRB7 and SRRT. Interacts (phosphorylated isoform JM-A CYT-1 and isoform JM-B CYT-1) with PIK3R1. Interacts with SHC1. Interacts with GRB2. Interacts (soluble intracellular domain) with BCL2. Interacts (phosphorylated) with STAT1. Interacts with CBFA2T3. Interacts (soluble intracellular domain) with STAT5A. Isoform JM-A CYT-1 and isoform JM-A CYT-2 are processed by ADAM17. Proteolytic processing in response to ligand or 12-O-tetradecanoylphorbol-13-acetate stimulation results in the production of 120 kDa soluble receptor forms and intermediate membrane-anchored 80 kDa fragments (m80HER4), which are further processed by a presenilin-dependent gamma-secretase to release a cytoplasmic intracellular domain (E4ICD; E4ICD1/s80Cyt1 or E4ICD2/s80Cyt2, depending on the isoform). Membrane-anchored 80 kDa fragments of the processed isoform JM-A CYT-1 are more readily degraded by the proteasome than fragments of isoform JM-A CYT-2, suggesting a prevalence of E4ICD2 over E4ICD1. Isoform JM-B CYT-1 and isoform JM-B CYT-2 lack the ADAM17 cleavage site and are not processed by ADAM17, precluding further processing by gamma-secretase. In terms of processing, autophosphorylated on tyrosine residues in response to ligand binding. Autophosphorylation occurs in trans, i.e. one subunit of the dimeric receptor phosphorylates tyrosine residues on the other subunit. Ligands trigger phosphorylation at specific tyrosine residues, thereby creating binding sites for scaffold proteins and effectors. Constitutively phosphorylated at a basal level when overexpressed in heterologous systems; ligand binding leads to increased phosphorylation. Phosphorylation at Tyr-1035 is important for interaction with STAT1. Phosphorylation at Tyr-1056 is important for interaction with PIK3R1. Phosphorylation at Tyr-1242 is important for interaction with SHC1. Phosphorylation at Tyr-1188 may also contribute to the interaction with SHC1. Isoform JM-A CYT-2 is constitutively phosphorylated on tyrosine residues in a ligand-independent manner. E4ICD2 but not E4ICD1 is phosphorylated on tyrosine residues. Post-translationally, ubiquitinated. During mitosis, the ERBB4 intracellular domain is ubiquitinated by the APC/C complex and targeted to proteasomal degradation. Isoform JM-A CYT-1 and isoform JM-B CYT-1 are ubiquitinated by WWP1. The ERBB4 intracellular domain (E4ICD1) is ubiquitinated, and this involves NEDD4. As to expression, isoform JM-A CYT-2 and isoform JM-B CYT-2 are expressed in cerebellum, cerebral cortex, spinal cord, medulla oblongata and eye, but the kidney expresses solely isoform JM-A CYT-2 and the heart solely isoform JM-B CYT-2.

Its subcellular location is the cell membrane. It localises to the nucleus. The protein localises to the mitochondrion. It carries out the reaction L-tyrosyl-[protein] + ATP = O-phospho-L-tyrosyl-[protein] + ADP + H(+). With respect to regulation, binding of a cognate ligand leads to dimerization and activation by autophosphorylation on tyrosine residues. In vitro kinase activity is increased by Mg(2+). Functionally, tyrosine-protein kinase that plays an essential role as cell surface receptor for neuregulins and EGF family members and regulates development of the heart, the central nervous system and the mammary gland, gene transcription, cell proliferation, differentiation, migration and apoptosis. Required for normal cardiac muscle differentiation during embryonic development, and for postnatal cardiomyocyte proliferation. Required for normal development of the embryonic central nervous system, especially for normal neural crest cell migration and normal axon guidance. Required for mammary gland differentiation, induction of milk proteins and lactation. Acts as cell-surface receptor for the neuregulins NRG1, NRG2, NRG3 and NRG4 and the EGF family members BTC, EREG and HBEGF. Ligand binding triggers receptor dimerization and autophosphorylation at specific tyrosine residues that then serve as binding sites for scaffold proteins and effectors. Ligand specificity and signaling is modulated by alternative splicing, proteolytic processing, and by the formation of heterodimers with other ERBB family members, thereby creating multiple combinations of intracellular phosphotyrosines that trigger ligand- and context-specific cellular responses. Mediates phosphorylation of SHC1 and activation of the MAP kinases MAPK1/ERK2 and MAPK3/ERK1. Isoform JM-A CYT-1 and isoform JM-B CYT-1 phosphorylate PIK3R1, leading to the activation of phosphatidylinositol 3-kinase and AKT1 and protect cells against apoptosis. Isoform JM-A CYT-1 and isoform JM-B CYT-1 mediate reorganization of the actin cytoskeleton and promote cell migration in response to NRG1. Isoform JM-A CYT-2 and isoform JM-B CYT-2 lack the phosphotyrosine that mediates interaction with PIK3R1, and hence do not phosphorylate PIK3R1, do not protect cells against apoptosis, and do not promote reorganization of the actin cytoskeleton and cell migration. Proteolytic processing of isoform JM-A CYT-1 and isoform JM-A CYT-2 gives rise to the corresponding soluble intracellular domains (4ICD) that translocate to the nucleus, promote nuclear import of STAT5A, activation of STAT5A, mammary epithelium differentiation, cell proliferation and activation of gene expression. The ERBB4 soluble intracellular domains (4ICD) colocalize with STAT5A at the CSN2 promoter to regulate transcription of milk proteins during lactation. The ERBB4 soluble intracellular domains can also translocate to mitochondria and promote apoptosis. This is Receptor tyrosine-protein kinase erbB-4 (Erbb4) from Mus musculus (Mouse).